The sequence spans 286 residues: Acetyl-coenzyme A carboxylase carboxyl transferase subunit beta (286 aa).

The CoA carboxyltransferase N-terminal domain maps to Leu28–Lys286. Zn(2+) contacts are provided by Cys32, Cys35, Cys51, and Cys54. The C4-type zinc finger occupies Cys32 to Cys54.

This sequence belongs to the AccD/PCCB family. In terms of assembly, acetyl-CoA carboxylase is a heterohexamer composed of biotin carboxyl carrier protein (AccB), biotin carboxylase (AccC) and two subunits each of ACCase subunit alpha (AccA) and ACCase subunit beta (AccD). Zn(2+) serves as cofactor.

It is found in the cytoplasm. It carries out the reaction N(6)-carboxybiotinyl-L-lysyl-[protein] + acetyl-CoA = N(6)-biotinyl-L-lysyl-[protein] + malonyl-CoA. It functions in the pathway lipid metabolism; malonyl-CoA biosynthesis; malonyl-CoA from acetyl-CoA: step 1/1. Functionally, component of the acetyl coenzyme A carboxylase (ACC) complex. Biotin carboxylase (BC) catalyzes the carboxylation of biotin on its carrier protein (BCCP) and then the CO(2) group is transferred by the transcarboxylase to acetyl-CoA to form malonyl-CoA. The polypeptide is Acetyl-coenzyme A carboxylase carboxyl transferase subunit beta (Oceanobacillus iheyensis (strain DSM 14371 / CIP 107618 / JCM 11309 / KCTC 3954 / HTE831)).